Consider the following 226-residue polypeptide: N-(5'-phosphoribosyl)anthranilate isomerase (226 aa).

Belongs to the TrpF family.

It catalyses the reaction N-(5-phospho-beta-D-ribosyl)anthranilate = 1-(2-carboxyphenylamino)-1-deoxy-D-ribulose 5-phosphate. It participates in amino-acid biosynthesis; L-tryptophan biosynthesis; L-tryptophan from chorismate: step 3/5. This chain is N-(5'-phosphoribosyl)anthranilate isomerase (TRP1), found in Saccharomyces kudriavzevii (strain ATCC MYA-4449 / AS 2.2408 / CBS 8840 / NBRC 1802 / NCYC 2889) (Yeast).